We begin with the raw amino-acid sequence, 399 residues long: Sphingosine-1-phosphate phosphatase 2 (399 aa).

Helical transmembrane passes span 88–108, 121–141, 160–180, and 185–205; these read YLFQ…FLPF, LIII…VLKW, YGMP…LLIS, and YQYP…LVCL. The segment at 136–144 is phosphatase sequence motif I; it reads KDVLKWPRP. The interval 163–166 is phosphatase sequence motif II; the sequence is PSTH. The Proton donor role is filled by H166. The segment at 206–217 is phosphatase sequence motif III; it reads SRLYTGMHTVLD. The active-site Nucleophile is H213. A run of 5 helical transmembrane segments spans residues 219-239, 247-267, 280-300, 318-338, and 371-391; these read LGGV…WTFI, PLFP…YPVS, ILAA…FQLV, TYML…ILLV, and VPYK…FVPM.

The protein belongs to the type 2 lipid phosphate phosphatase family. As to expression, expressed strongly in kidney and heart, followed by brain, colon, small intestine and lung. Not detected in skeletal muscle, thymus, spleen, liver, placenta, and peripheral blood leukocytes.

It localises to the endoplasmic reticulum membrane. The catalysed reaction is sphinganine 1-phosphate + H2O = sphinganine + phosphate. It carries out the reaction sphing-4-enine 1-phosphate + H2O = sphing-4-enine + phosphate. It catalyses the reaction (4R)-hydroxysphinganine 1-phosphate + H2O = (4R)-hydroxysphinganine + phosphate. In terms of biological role, has specific phosphohydrolase activity towards sphingoid base 1-phosphates. Has high phosphohydrolase activity against dihydrosphingosine-1-phosphate and sphingosine-1-phosphate (S1P) in vitro. Sphingosine-1-phosphate phosphatase activity is needed for efficient recycling of sphingosine into the sphingolipid synthesis pathway. May play a role in attenuating intracellular sphingosine 1-phosphate (S1P) signaling. May play a role in pro-inflammatory signaling. Plays a role in the regulation of pancreatic islet beta-cell endoplasmic reticulum stress and proliferation. The protein is Sphingosine-1-phosphate phosphatase 2 of Homo sapiens (Human).